The following is a 1661-amino-acid chain: MEEAGGPMARAKARVVSATLTWRQRPPTQEEIKHGFHKVSLVSGAQMEAPQKEMFEFSRREEVEVNGFATQEEETVNCQGPRDTAGSKNFQSHGPIFSKKYIPPPKEKRPEGRLKEAVDQSDGSRQAPRTEPPCVGAMARTELLVPLPGPREPSPHPGVGLTSGSSRSLEEYRVTRTVRTTTVVGGHVDRRMSSSVTVRPVSSGEALPRGRQVSRMVPPVVVGSPPGSPSRSQAVKVLSNLVPAGHSPPASHLPRPTAGGPRSTGLGSTVGAALRQLPETGTAELKDSSALASTGIPASAHLPKNQDAPAACPDRDQGRAPDARACELWQVLGAPSSTELPLQTSQGQASVPSSPRLETHVPSPGLTHPAKQPVVPTHPGARLTPLVLPPKKKDGPVDPPAATVLPMVRSEHVTVPGQPPAPSTTRRKDVPSPGGLSAPSSPRNKFVQNSENVPVLPFTQREVVKGPGAPAASSPTRKEVVQGSSASAASSPTWKEVVKGPGAPAASSPTQKEVVQGSSAPAALFPTWKEVVKGPGAPDASFPTWKEVVKGPGAPAASSPTQKEVVQGSGAPAALSTTPKEVVKGPGAPAASSPTQKEVVKGPCAPAASSPTQKEVVQGSGAPAALSPKSTEVVQGPKGSSSIQKEAVQGIAGSLAPPLTKEETVQGPIAPATSLPKQDKGVQDSEGSPISSLTQKEVVQDPDALPAPSSSVDRVSPSPGGTPAPVPTGAEASTESQLVSDPTEGKTCTETSREEDEVALAADLEIFLDTLRSMEPPEILRTHRLPRAPRSSYLSMYATLPAIEEDQLGPWVLGPGPQEVPSLEEKEEEEEEEPENPYLSDDEKLQRRQEKAGPSPSRDLHPARPTQVSCSPLEMMKKHVAGTKGPHSELGLELQGGSRPTSRLGGSLLFGSLVPTAKEASTPEPLGTKLSALLPHGAPGLRKVPGQLPLLCSERSSPTEKLACSLPLEGWSPALKTQGKLNTRPGKVIFFSESGCQGSGREVWGDIVDASGWAPVASIRVVRGCWVLYEEPEFRGQKLVLPEGDMELRTPGTKWSPQGIGSLRRVVWDYSTPEISLFSEEGLKGEQVKLTEALKNSQGLEKPLQVASATVSAGLWLLYPKPLFEDTPYILEPGEYPTSEAWGTSDPSVGSLKPMRLGCPSVEKPGEPRAVVYEAPGFQGRSWEVSRDIYNLQQPEDSQSPHLASVGSLRVLGGCWVGYEKEGFRGHQYLLEEGEYPDWSHWGGYDELLTSLRVIRTDFGDPAVVLFEAMDFEGHGVEVSKALPDVELVQHGPSTQAIHVLSGVWVAYQEVGFSGEQYVLEKGVYRNCEDWGAGNSTLASLQPVLQVGEHDLHFVSKIQLFSRPDFLGDHFSFEDDQAALPASFRPQSCRVHGGSWILFDETNFEGDQHILSEGEFPTLTAMGCLASTVLGSLQKVSLHFSEPSIFLYGLECFEGKEIELSREVRSLQAEGFNNHVLSVRIKGGIWVLCEHSDFRGRQWLVGSCEITNWLTYSGTQRVGSLYPIKQRRVYFRLWNAALGGFLAVPDHVEDMKAGRVVVADPQAGGSCIWYYEDGLLKNQMAPTMSLQVIGPPSPGSKVVLWAESRLPRQTWSISESGHICSQMFEGQILDVKGGRGYDRDHVVLWEPDEDRASQIWTIHVL.

Disordered stretches follow at residues 72 to 135 (EEET…PPCV), 148 to 168 (PGPR…SSRS), 242 to 268 (VPAG…GLGS), 297 to 321 (PASA…GRAP), 337 to 380 (STEL…THPG), 411 to 757 (EHVT…EEDE), 808 to 871 (LGPW…VSCS), and 883 to 903 (TKGP…PTSR). Residues 105-118 (PKEKRPEGRLKEAV) are compositionally biased toward basic and acidic residues. Residues 337–353 (STELPLQTSQGQASVPS) are compositionally biased toward polar residues. Positions 431 to 442 (PSPGGLSAPSSP) are enriched in low complexity. Polar residues-rich tracts occupy residues 507–519 (SSPT…QGSS), 628–644 (PKST…SSIQ), and 685–697 (SEGS…TQKE). Residues 706–719 (PAPSSSVDRVSPSP) are compositionally biased toward low complexity. A compositionally biased stretch (polar residues) spans 731-750 (EASTESQLVSDPTEGKTCTE). Residues 825-835 (EKEEEEEEEPE) are compositionally biased toward acidic residues. Basic and acidic residues predominate over residues 841–851 (DDEKLQRRQEK). Beta/gamma crystallin 'Greek key' domains lie at 986–1023 (GKVI…RVVR), 1024–1067 (GCWV…RRVV), 1073–1113 (PEIS…TVSA), 1114–1156 (GLWL…KPMR), 1168–1213 (PRAV…RVLG), 1214–1256 (GCWV…RVIR), 1262–1302 (PAVV…HVLS), 1303–1345 (GVWV…QPVL), 1356–1393 (SKIQ…RVHG), 1394–1437 (GSWI…QKVS), 1443–1483 (PSIF…RIKG), and 1484–1525 (GIWV…YPIK). In terms of domain architecture, Ricin B-type lectin spans 1569 to 1659 (WYYEDGLLKN…DRASQIWTIH (91 aa)).

This sequence belongs to the beta/gamma-crystallin family.

In Homo sapiens (Human), this protein is Beta/gamma crystallin domain-containing protein 2.